The following is a 556-amino-acid chain: Urocanate hydratase (556 aa).

Residues Gly-52–Gly-53, Gln-130, Gly-176–Gly-178, Glu-196, Arg-201, Asn-242–Ala-243, Gln-263–His-267, Tyr-273–Leu-274, and Tyr-322 each bind NAD(+). Residue Cys-410 is part of the active site. NAD(+) is bound at residue Gly-492.

This sequence belongs to the urocanase family. NAD(+) is required as a cofactor.

The protein localises to the cytoplasm. The enzyme catalyses 4-imidazolone-5-propanoate = trans-urocanate + H2O. It participates in amino-acid degradation; L-histidine degradation into L-glutamate; N-formimidoyl-L-glutamate from L-histidine: step 2/3. Its function is as follows. Catalyzes the conversion of urocanate to 4-imidazolone-5-propionate. This is Urocanate hydratase from Shewanella piezotolerans (strain WP3 / JCM 13877).